A 561-amino-acid chain; its full sequence is Chaperonin GroEL 1 (561 aa).

Residues 29–32, 86–90, Gly-413, and Asp-495 contribute to the ATP site; these read TMGP and DGTTT.

It belongs to the chaperonin (HSP60) family. In terms of assembly, forms a cylinder of 14 subunits composed of two heptameric rings stacked back-to-back. Interacts with the co-chaperonin GroES.

The protein localises to the cytoplasm. It carries out the reaction ATP + H2O + a folded polypeptide = ADP + phosphate + an unfolded polypeptide.. Together with its co-chaperonin GroES, plays an essential role in assisting protein folding. The GroEL-GroES system forms a nano-cage that allows encapsulation of the non-native substrate proteins and provides a physical environment optimized to promote and accelerate protein folding. This chain is Chaperonin GroEL 1, found in Trichodesmium erythraeum (strain IMS101).